We begin with the raw amino-acid sequence, 83 residues long: Kappa-theraphotoxin-Cg2a (83 aa).

A signal peptide spans 1–21 (MKGSAFAIILGLVVLCACSFA). A propeptide spanning residues 22–53 (EDEQDQFASPNELLRSMFLESRHELIPEVEGR) is cleaved from the precursor. 3 cysteine pairs are disulfide-bonded: C55–C69, C62–C74, and C68–C78. L82 carries the post-translational modification Leucine amide.

The protein belongs to the neurotoxin 30 (phrixotoxin) family. In terms of tissue distribution, expressed by the venom gland.

Its subcellular location is the secreted. Its function is as follows. Inhibits voltage-gated potassium channels of the subtype Kv4.1/KCND1 with high affinity and shows weak effects on Kv4.2/KCND2 and Kv2.1/KCNB1 subtypes. The toxin modifies the gating behavior of the channel and may interact with the S3-S4 extracellular loop. This Chilobrachys guangxiensis (Chinese earth tiger tarantula) protein is Kappa-theraphotoxin-Cg2a.